The primary structure comprises 342 residues: Glucan endo-1,3-beta-glucosidase (342 aa).

An N-terminal signal peptide occupies residues 1 to 26; it reads MLASSPMLLFLLSLLMAYNFDTTAGQ. The active-site Proton donor is the E119. E261 serves as the catalytic Nucleophile.

The protein belongs to the glycosyl hydrolase 17 family. In terms of processing, the N-terminus is blocked.

It is found in the vacuole. It carries out the reaction Hydrolysis of (1-&gt;3)-beta-D-glucosidic linkages in (1-&gt;3)-beta-D-glucans.. In terms of biological role, is thought to be an important plant defense-related product against fungal pathogens. Accumulation of the glucanase can be detected as early as 4 hours after inoculation. This Brassica campestris (Field mustard) protein is Glucan endo-1,3-beta-glucosidase (BGL).